A 342-amino-acid chain; its full sequence is L-threonine 3-dehydrogenase (342 aa).

Position 38 (cysteine 38) interacts with Zn(2+). Residues threonine 40 and histidine 43 each act as charge relay system in the active site. Zn(2+)-binding residues include histidine 63 and glutamate 64. NAD(+) contacts are provided by residues isoleucine 175, aspartate 195, arginine 200, 263-265, and 287-288; these read LGI and VY.

This sequence belongs to the zinc-containing alcohol dehydrogenase family. As to quaternary structure, homotetramer. Zn(2+) serves as cofactor.

Its subcellular location is the cytoplasm. It carries out the reaction L-threonine + NAD(+) = (2S)-2-amino-3-oxobutanoate + NADH + H(+). It participates in amino-acid degradation; L-threonine degradation via oxydo-reductase pathway; glycine from L-threonine: step 1/2. Catalyzes the NAD(+)-dependent oxidation of L-threonine to 2-amino-3-ketobutyrate. In Ruegeria pomeroyi (strain ATCC 700808 / DSM 15171 / DSS-3) (Silicibacter pomeroyi), this protein is L-threonine 3-dehydrogenase.